The following is a 230-amino-acid chain: Large ribosomal subunit protein uL1 (230 aa).

It belongs to the universal ribosomal protein uL1 family. In terms of assembly, part of the 50S ribosomal subunit.

Its function is as follows. Binds directly to 23S rRNA. The L1 stalk is quite mobile in the ribosome, and is involved in E site tRNA release. Protein L1 is also a translational repressor protein, it controls the translation of the L11 operon by binding to its mRNA. In Thermoanaerobacter sp. (strain X514), this protein is Large ribosomal subunit protein uL1.